A 351-amino-acid chain; its full sequence is Beta-hexosaminidase (351 aa).

Residues Asp-62, Arg-70, Arg-134, and 164-165 (KH) contribute to the substrate site. Residue His-177 is the Proton donor/acceptor of the active site. Asp-249 functions as the Nucleophile in the catalytic mechanism.

The protein belongs to the glycosyl hydrolase 3 family. NagZ subfamily. In terms of assembly, monomer.

The protein localises to the cytoplasm. It catalyses the reaction Hydrolysis of terminal non-reducing N-acetyl-D-hexosamine residues in N-acetyl-beta-D-hexosaminides.. The protein operates within cell wall biogenesis; peptidoglycan recycling. In terms of biological role, plays a role in peptidoglycan recycling by cleaving the terminal beta-1,4-linked N-acetylglucosamine (GlcNAc) from peptide-linked peptidoglycan fragments, giving rise to free GlcNAc, anhydro-N-acetylmuramic acid and anhydro-N-acetylmuramic acid-linked peptides. The chain is Beta-hexosaminidase from Pasteurella multocida (strain Pm70).